Here is a 185-residue protein sequence, read N- to C-terminus: dCTP deaminase (185 aa).

DCTP contacts are provided by residues 107-112 (KSTYAR), 131-133 (TLE), glutamine 152, tyrosine 166, and glutamine 176. Glutamate 133 acts as the Proton donor/acceptor in catalysis.

It belongs to the dCTP deaminase family. In terms of assembly, homotrimer.

The enzyme catalyses dCTP + H2O + H(+) = dUTP + NH4(+). The protein operates within pyrimidine metabolism; dUMP biosynthesis; dUMP from dCTP (dUTP route): step 1/2. In terms of biological role, catalyzes the deamination of dCTP to dUTP. This chain is dCTP deaminase, found in Anaplasma phagocytophilum (strain HZ).